A 282-amino-acid chain; its full sequence is Putative sugar uptake protein lp_2594 (282 aa).

The next 10 membrane-spanning stretches (helical) occupy residues 2 to 21 (IFLI…LLVG), 31 to 48 (MFGM…FWLF), 53 to 75 (VTIS…IGQL), 90 to 112 (MPIS…FGEW), 119 to 136 (ILGL…ALSA), 146 to 163 (FSCY…WIYS), 176 to 194 (LFLP…WAIY), 209 to 226 (TLPG…ILSA), 233 to 252 (NAYI…GLFF), and 262 to 281 (IVSV…TTAL).

The protein belongs to the GRP transporter (TC 2.A.7.5) family.

Its subcellular location is the cell membrane. The protein is Putative sugar uptake protein lp_2594 of Lactiplantibacillus plantarum (strain ATCC BAA-793 / NCIMB 8826 / WCFS1) (Lactobacillus plantarum).